The primary structure comprises 312 residues: ADP-L-glycero-D-manno-heptose-6-epimerase (312 aa).

Residues 10–11 (FI), 31–32 (DN), lysine 38, lysine 53, 75–79 (EGACS), and asparagine 92 each bind NADP(+). The active-site Proton acceptor is the tyrosine 140. An NADP(+)-binding site is contributed by lysine 144. Asparagine 169 is a substrate binding site. Positions 170 and 178 each coordinate NADP(+). Lysine 178 (proton acceptor) is an active-site residue. Substrate-binding positions include serine 180, histidine 187, 201–204 (FAGS), arginine 209, and tyrosine 274.

Belongs to the NAD(P)-dependent epimerase/dehydratase family. HldD subfamily. As to quaternary structure, homopentamer. It depends on NADP(+) as a cofactor.

It carries out the reaction ADP-D-glycero-beta-D-manno-heptose = ADP-L-glycero-beta-D-manno-heptose. Its pathway is nucleotide-sugar biosynthesis; ADP-L-glycero-beta-D-manno-heptose biosynthesis; ADP-L-glycero-beta-D-manno-heptose from D-glycero-beta-D-manno-heptose 7-phosphate: step 4/4. The protein operates within bacterial outer membrane biogenesis; LPS core biosynthesis. Its function is as follows. Catalyzes the interconversion between ADP-D-glycero-beta-D-manno-heptose and ADP-L-glycero-beta-D-manno-heptose via an epimerization at carbon 6 of the heptose. In Photorhabdus laumondii subsp. laumondii (strain DSM 15139 / CIP 105565 / TT01) (Photorhabdus luminescens subsp. laumondii), this protein is ADP-L-glycero-D-manno-heptose-6-epimerase.